Here is a 228-residue protein sequence, read N- to C-terminus: 7-cyano-7-deazaguanine synthase (228 aa).

13 to 23 (LSGGMDSTLSS) serves as a coordination point for ATP. 4 residues coordinate Zn(2+): cysteine 192, cysteine 200, cysteine 203, and cysteine 206.

This sequence belongs to the QueC family. Zn(2+) serves as cofactor.

It carries out the reaction 7-carboxy-7-deazaguanine + NH4(+) + ATP = 7-cyano-7-deazaguanine + ADP + phosphate + H2O + H(+). The protein operates within purine metabolism; 7-cyano-7-deazaguanine biosynthesis. In terms of biological role, catalyzes the ATP-dependent conversion of 7-carboxy-7-deazaguanine (CDG) to 7-cyano-7-deazaguanine (preQ(0)). The polypeptide is 7-cyano-7-deazaguanine synthase (Aliarcobacter butzleri (strain RM4018) (Arcobacter butzleri)).